A 178-amino-acid chain; its full sequence is ATP synthase subunit delta (178 aa).

This sequence belongs to the ATPase delta chain family. F-type ATPases have 2 components, F(1) - the catalytic core - and F(0) - the membrane proton channel. F(1) has five subunits: alpha(3), beta(3), gamma(1), delta(1), epsilon(1). F(0) has three main subunits: a(1), b(2) and c(10-14). The alpha and beta chains form an alternating ring which encloses part of the gamma chain. F(1) is attached to F(0) by a central stalk formed by the gamma and epsilon chains, while a peripheral stalk is formed by the delta and b chains.

It localises to the cell membrane. F(1)F(0) ATP synthase produces ATP from ADP in the presence of a proton or sodium gradient. F-type ATPases consist of two structural domains, F(1) containing the extramembraneous catalytic core and F(0) containing the membrane proton channel, linked together by a central stalk and a peripheral stalk. During catalysis, ATP synthesis in the catalytic domain of F(1) is coupled via a rotary mechanism of the central stalk subunits to proton translocation. Functionally, this protein is part of the stalk that links CF(0) to CF(1). It either transmits conformational changes from CF(0) to CF(1) or is implicated in proton conduction. This Streptococcus agalactiae serotype Ia (strain ATCC 27591 / A909 / CDC SS700) protein is ATP synthase subunit delta.